The sequence spans 487 residues: 26S proteasome non-ATPase regulatory subunit 3 homolog B (487 aa).

The disordered stretch occupies residues 1–21 (MTQDVEMKDNQTPTQSVVSAP). Over residues 10 to 21 (NQTPTQSVVSAP) the composition is skewed to polar residues. Residues 239 to 420 (CRYLFYLGKI…GCMVSKETGD (182 aa)) enclose the PCI domain. Residues 452 to 487 (PPNTHREKESEEKRREMKQQEEELAKYMAEEDDDDF) form a disordered region. The span at 455–480 (THREKESEEKRREMKQQEEELAKYMA) shows a compositional bias: basic and acidic residues.

The protein belongs to the proteasome subunit S3 family. As to quaternary structure, component of the 19S regulatory particle (RP/PA700) lid subcomplex of the 26S proteasome. The 26S proteasome is composed of a core protease (CP), known as the 20S proteasome, capped at one or both ends by the 19S regulatory particle (RP/PA700). The RP/PA700 complex is composed of at least 17 different subunits in two subcomplexes, the base and the lid, which form the portions proximal and distal to the 20S proteolytic core, respectively. Interacts with UCH1 and UCH2. As to expression, preferentially expressed in flowers.

Acts as a regulatory subunit of the 26 proteasome which is involved in the ATP-dependent degradation of ubiquitinated proteins. The sequence is that of 26S proteasome non-ATPase regulatory subunit 3 homolog B from Arabidopsis thaliana (Mouse-ear cress).